The primary structure comprises 514 residues: Peptide chain release factor 3 (514 aa).

In terms of domain architecture, tr-type G spans 8 to 268 (KKRRTFAIIS…TFLEFAPEPH (261 aa)). GTP contacts are provided by residues 17–24 (SHPDAGKT), 85–89 (DTPGH), and 139–142 (NKLD).

The protein belongs to the TRAFAC class translation factor GTPase superfamily. Classic translation factor GTPase family. PrfC subfamily.

Its subcellular location is the cytoplasm. Functionally, increases the formation of ribosomal termination complexes and stimulates activities of RF-1 and RF-2. It binds guanine nucleotides and has strong preference for UGA stop codons. It may interact directly with the ribosome. The stimulation of RF-1 and RF-2 is significantly reduced by GTP and GDP, but not by GMP. This chain is Peptide chain release factor 3, found in Streptococcus pyogenes serotype M49 (strain NZ131).